The primary structure comprises 321 residues: Methionine import ATP-binding protein MetN (321 aa).

Residues 2 to 241 (INAVDLHKVY…PGSLLARSLF (240 aa)) form the ABC transporter domain. 38-45 (GPSGAGKS) contributes to the ATP binding site.

This sequence belongs to the ABC transporter superfamily. Methionine importer (TC 3.A.1.24) family. In terms of assembly, the complex is composed of two ATP-binding proteins (MetN), two transmembrane proteins (MetI) and a solute-binding protein (MetQ).

It localises to the cell membrane. It catalyses the reaction L-methionine(out) + ATP + H2O = L-methionine(in) + ADP + phosphate + H(+). It carries out the reaction D-methionine(out) + ATP + H2O = D-methionine(in) + ADP + phosphate + H(+). Functionally, part of the ABC transporter complex MetNIQ involved in methionine import. Responsible for energy coupling to the transport system. The protein is Methionine import ATP-binding protein MetN of Thermobifida fusca (strain YX).